A 619-amino-acid chain; its full sequence is Dihydroxy-acid dehydratase (619 aa).

Residue Asp-81 participates in Mg(2+) binding. Cys-122 lines the [2Fe-2S] cluster pocket. Mg(2+) is bound by residues Asp-123 and Lys-124. Position 124 is an N6-carboxylysine (Lys-124). Cys-198 is a [2Fe-2S] cluster binding site. Glu-494 contacts Mg(2+). Ser-520 serves as the catalytic Proton acceptor.

The protein belongs to the IlvD/Edd family. In terms of assembly, homodimer. It depends on [2Fe-2S] cluster as a cofactor. Mg(2+) is required as a cofactor.

It carries out the reaction (2R)-2,3-dihydroxy-3-methylbutanoate = 3-methyl-2-oxobutanoate + H2O. It catalyses the reaction (2R,3R)-2,3-dihydroxy-3-methylpentanoate = (S)-3-methyl-2-oxopentanoate + H2O. The protein operates within amino-acid biosynthesis; L-isoleucine biosynthesis; L-isoleucine from 2-oxobutanoate: step 3/4. It functions in the pathway amino-acid biosynthesis; L-valine biosynthesis; L-valine from pyruvate: step 3/4. Functionally, functions in the biosynthesis of branched-chain amino acids. Catalyzes the dehydration of (2R,3R)-2,3-dihydroxy-3-methylpentanoate (2,3-dihydroxy-3-methylvalerate) into 2-oxo-3-methylpentanoate (2-oxo-3-methylvalerate) and of (2R)-2,3-dihydroxy-3-methylbutanoate (2,3-dihydroxyisovalerate) into 2-oxo-3-methylbutanoate (2-oxoisovalerate), the penultimate precursor to L-isoleucine and L-valine, respectively. The chain is Dihydroxy-acid dehydratase from Neisseria meningitidis serogroup A / serotype 4A (strain DSM 15465 / Z2491).